We begin with the raw amino-acid sequence, 441 residues long: Xylose isomerase (441 aa).

Residues H105 and D108 contribute to the active site. 7 residues coordinate Mg(2+): E236, E272, H275, D300, D311, D313, and D343.

The protein belongs to the xylose isomerase family. As to quaternary structure, homotetramer. Requires Mg(2+) as cofactor.

It is found in the cytoplasm. The enzyme catalyses alpha-D-xylose = alpha-D-xylulofuranose. This Mesorhizobium japonicum (strain LMG 29417 / CECT 9101 / MAFF 303099) (Mesorhizobium loti (strain MAFF 303099)) protein is Xylose isomerase.